The primary structure comprises 728 residues: FAS1 domain-containing protein fsc1 (728 aa).

Positions 1–21 (MNLQFRLYLLFILLFISFANG) are cleaved as a signal peptide. At 22 to 670 (KNEYEDKSTS…TKRQNRWRIT (649 aa)) the chain is on the vacuolar side. FAS1 domains are found at residues 29 to 151 (STSI…DNII) and 154 to 285 (PPPA…SSLI). An N-linked (GlcNAc...) asparagine glycan is attached at N89. N-linked (GlcNAc...) asparagine glycans are attached at residues N404 and N501. The chain crosses the membrane as a helical span at residues 671 to 691 (FISISGLLLSVGICVLCYKIY). The Cytoplasmic segment spans residues 692 to 728 (FKFFRNRFMNQGEREPLLAPADSDTMAGRRNSSSLSV).

It localises to the vacuole membrane. Functionally, required for the fusion of autophagosomes with the vacuole. This Schizosaccharomyces pombe (strain 972 / ATCC 24843) (Fission yeast) protein is FAS1 domain-containing protein fsc1 (fsc1).